We begin with the raw amino-acid sequence, 440 residues long: Probable aldose 1-epimerase ARB_05372 (440 aa).

A signal peptide spans Met-1 to Ala-24. Residues Asn-32, Asn-38, Asn-43, Asn-68, and Asn-112 are each glycosylated (N-linked (GlcNAc...) asparagine). Substrate is bound at residue Asn-125–Arg-126. Asn-129, Asn-147, Asn-163, Asn-171, and Asn-199 each carry an N-linked (GlcNAc...) asparagine glycan. His-233 (proton donor) is an active-site residue. 4 N-linked (GlcNAc...) asparagine glycosylation sites follow: Asn-243, Asn-275, Asn-281, and Asn-306. Residue Asp-311 coordinates substrate. Residues Asn-321, Asn-337, Asn-365, and Asn-385 are each glycosylated (N-linked (GlcNAc...) asparagine). Glu-401 acts as the Proton acceptor in catalysis.

The protein belongs to the aldose epimerase family. In terms of assembly, monomer.

It is found in the secreted. It catalyses the reaction alpha-D-glucose = beta-D-glucose. It participates in carbohydrate metabolism; hexose metabolism. Its function is as follows. Mutarotase converts alpha-aldose to the beta-anomer. It is active on D-glucose, L-arabinose, D-xylose, D-galactose, maltose and lactose. The sequence is that of Probable aldose 1-epimerase ARB_05372 from Arthroderma benhamiae (strain ATCC MYA-4681 / CBS 112371) (Trichophyton mentagrophytes).